Consider the following 325-residue polypeptide: Phosphatidylglycerol--prolipoprotein diacylglyceryl transferase (325 aa).

4 helical membrane-spanning segments follow: residues 19–39, 47–67, 93–113, and 119–139; these read IPLR…VWFG, GGKA…GLVG, IWEG…GAWI, and GIPL…AQAI. R141 provides a ligand contact to a 1,2-diacyl-sn-glycero-3-phospho-(1'-sn-glycerol). The next 3 membrane-spanning stretches (helical) occupy residues 175 to 195, 207 to 225, and 237 to 257; these read HPTF…VIWA, FALY…EYMR, and LNVW…VISA. Residues 266 to 312 are compositionally biased toward basic and acidic residues; sequence IVEPDRDATPAEKDGSGEDGSGEKGVAKADAAAKDPLTKDEPGKDAT. The interval 266–325 is disordered; that stretch reads IVEPDRDATPAEKDGSGEDGSGEKGVAKADAAAKDPLTKDEPGKDATAENAGAAGAAEKA. A compositionally biased stretch (low complexity) spans 313-325; sequence AENAGAAGAAEKA.

Belongs to the Lgt family.

The protein localises to the cell membrane. It catalyses the reaction L-cysteinyl-[prolipoprotein] + a 1,2-diacyl-sn-glycero-3-phospho-(1'-sn-glycerol) = an S-1,2-diacyl-sn-glyceryl-L-cysteinyl-[prolipoprotein] + sn-glycerol 1-phosphate + H(+). It participates in protein modification; lipoprotein biosynthesis (diacylglyceryl transfer). Its function is as follows. Catalyzes the transfer of the diacylglyceryl group from phosphatidylglycerol to the sulfhydryl group of the N-terminal cysteine of a prolipoprotein, the first step in the formation of mature lipoproteins. The sequence is that of Phosphatidylglycerol--prolipoprotein diacylglyceryl transferase from Streptomyces griseus subsp. griseus (strain JCM 4626 / CBS 651.72 / NBRC 13350 / KCC S-0626 / ISP 5235).